We begin with the raw amino-acid sequence, 189 residues long: Elongation factor P (189 aa).

Lysine 34 carries the post-translational modification N6-(3,6-diaminohexanoyl)-5-hydroxylysine.

Belongs to the elongation factor P family. Post-translationally, may be beta-lysylated on the epsilon-amino group of Lys-34 by the combined action of EpmA and EpmB, and then hydroxylated on the C5 position of the same residue by EpmC (if this protein is present). Lysylation is critical for the stimulatory effect of EF-P on peptide-bond formation. The lysylation moiety may extend toward the peptidyltransferase center and stabilize the terminal 3-CCA end of the tRNA. Hydroxylation of the C5 position on Lys-34 may allow additional potential stabilizing hydrogen-bond interactions with the P-tRNA.

The protein resides in the cytoplasm. It functions in the pathway protein biosynthesis; polypeptide chain elongation. Functionally, involved in peptide bond synthesis. Alleviates ribosome stalling that occurs when 3 or more consecutive Pro residues or the sequence PPG is present in a protein, possibly by augmenting the peptidyl transferase activity of the ribosome. Modification of Lys-34 is required for alleviation. This chain is Elongation factor P, found in Legionella pneumophila (strain Paris).